Here is a 597-residue protein sequence, read N- to C-terminus: Gamma-terpinene synthase, chloroplastic (597 aa).

The transit peptide at 1 to 47 (MATLSMQVSILSKQVKNLNSFGMRASKLPMVARRVDVSTTRLRPICS) directs the protein to the chloroplast. Mn(2+)-binding residues include Asp350 and Asp354. The short motif at 350–354 (DDVYD) is the DDXXD motif element. Homodimerization regions lie at residues 356–362 (YGTLDEL) and 428–465 (EAKWYYAGYTPTLAEYLENAKVSISSPTIISQVYFTLP). Mn(2+) is bound by residues Asp494 and Glu502.

It belongs to the terpene synthase family. In terms of assembly, homodimer. Mn(2+) serves as cofactor. The cofactor is Mg(2+).

It localises to the plastid. The protein localises to the chloroplast. The catalysed reaction is (2E)-geranyl diphosphate = gamma-terpinene + diphosphate. It participates in secondary metabolite biosynthesis; terpenoid biosynthesis. Functionally, involved in the biosynthesis of phenolic monoterpenes natural products thymol and carvacrol which have a broad range of biological activities acting as antimicrobial compounds, insecticides, antioxidants and pharmaceutical agents. Monoterpene synthase which catalyzes the conversion of geranyl diphosphate (GPP) to gamma-terpinene and minor amounts of other monoterpenes (e.g. alpha-thujene, alpha-terpinene, myrcene, sabinene, (+)-R-limonene, alpha-pinene and alpha-phellandrene). This chain is Gamma-terpinene synthase, chloroplastic, found in Thymus caespititius (Cretan thyme).